We begin with the raw amino-acid sequence, 490 residues long: CUGBP Elav-like family member 1 (490 aa).

RRM domains follow at residues 16 to 99 (IKMF…PADS) and 108 to 188 (RKLF…FADT). A disordered region spans residues 283–312 (PSAGSALTTSSSPLSILTSSGSSPSSNNNS). Residues 405–483 (ANLFIYHLPQ…KRLKVQLKRS (79 aa)) form the RRM 3 domain.

Belongs to the CELF/BRUNOL family. In terms of assembly, oligomer. Oligomerization is required for RNA-binding and EDEN-dependent deadenylation. Phosphorylated during oocyte maturation and dephosphorylated following egg activation. Dephosphorylation is calcium dependent and correlates with the increase in the activity of EDEN-dependent deadenylation.

The protein localises to the nucleus. It localises to the cytoplasm. Its function is as follows. RNA-binding protein implicated in the regulation of several post-transcriptional events. May be involved in pre-mRNA alternative splicing, mRNA translation activation and stability. Mediates the rapid and sequence-specific cytoplasmic deadenylation of EDEN-containing maternal mRNAs following fertilization. Binds to AU-rich sequences (AREs) of jun mRNA. Binds to the embryonic deadenylation element (EDEN) motif localized in the 3'-UTR of maternal mRNAs. Binds to RNA containing several repeats of the consensus sequence 5'-UGU-3'. EDEN-dependent deadenylation is enhanced by the presence of an additional cis element composed of three AUU repeats. This Xenopus tropicalis (Western clawed frog) protein is CUGBP Elav-like family member 1 (celf1).